The primary structure comprises 255 residues: tRNA pseudouridine synthase A (255 aa).

D56 (nucleophile) is an active-site residue. Substrate is bound at residue Y114.

Belongs to the tRNA pseudouridine synthase TruA family. Homodimer.

It carries out the reaction uridine(38/39/40) in tRNA = pseudouridine(38/39/40) in tRNA. Formation of pseudouridine at positions 38, 39 and 40 in the anticodon stem and loop of transfer RNAs. The polypeptide is tRNA pseudouridine synthase A (Methylacidiphilum infernorum (isolate V4) (Methylokorus infernorum (strain V4))).